The following is a 210-amino-acid chain: NDR1/HIN1-like protein 12 (210 aa).

A helical membrane pass occupies residues 23 to 43 (GVIIGFIIIVLITIFLVWIIL). The N-linked (GlcNAc...) asparagine glycan is linked to asparagine 61.

As to quaternary structure, may form oligomers or be a component of larger protein complex in plasma membranes. As to expression, expressed in leaves, stems and flowers, and, to a lower extent, in siliques and roots.

It is found in the cell membrane. Its function is as follows. May play a role in plant immunity. The polypeptide is NDR1/HIN1-like protein 12 (Arabidopsis thaliana (Mouse-ear cress)).